Consider the following 286-residue polypeptide: Small ribosomal subunit protein uS2 (286 aa).

A disordered region spans residues 257-286 (KDNKSNKSNTINADENIKESDLIGGSNNEG).

The protein belongs to the universal ribosomal protein uS2 family.

The chain is Small ribosomal subunit protein uS2 from Ehrlichia ruminantium (strain Gardel).